We begin with the raw amino-acid sequence, 366 residues long: Isocitrate dehydrogenase [NAD] subunit alpha, mitochondrial (366 aa).

The transit peptide at 1 to 27 (MAGPAWISKVSRLLGAFHNPKQVTRGF) directs the protein to the mitochondrion. N6-succinyllysine is present on Lys-77. A Phosphothreonine modification is found at Thr-101. Residues Arg-115, Arg-125, and Arg-146 each contribute to the substrate site. Lys-223 bears the N6-acetyllysine mark. Mg(2+) contacts are provided by Asp-233, Asp-257, and Asp-261. An N6-acetyllysine; alternate modification is found at Lys-343. Residue Lys-343 is modified to N6-succinyllysine; alternate. Residue Lys-350 is modified to N6-succinyllysine.

The protein belongs to the isocitrate and isopropylmalate dehydrogenases family. Heterooligomer of subunits alpha (IDH3A), beta (IDH3B), and gamma (IDH3G) in the apparent ratio of 2:1:1. The heterodimer containing one IDH3A and one IDH3B subunit and the heterodimer containing one IDH3A and one IDH3G subunit assemble into a heterotetramer (which contains two subunits of IDH3A, one of IDH3B and one of IDH3G) and further into the heterooctamer. The cofactor is Mg(2+). Mn(2+) is required as a cofactor.

It is found in the mitochondrion. It carries out the reaction D-threo-isocitrate + NAD(+) = 2-oxoglutarate + CO2 + NADH. Its activity is regulated as follows. The heterotetramer and the heterodimer composed of IDH3A and IDH3G subunits can be allosterically activated by citrate (CIT) or/and ADP, and the two activators can act independently or synergistically. The heterodimer composed of IDH3A and IDH3B subunits cannot be allosterically regulated and the allosteric regulation of the heterotetramer is through the IDH3G subunit and not the IDH3B subunit. The IDH3G subunit contains the allosteric site which consists of a CIT-binding site and an ADP-binding site, and the binding of CIT and ADP causes conformational changes at the allosteric site which are transmitted to the active site in the catalytic subunit (IDH3A) through a cascade of conformational changes at the heterodimer interface, leading to stabilization of the isocitrate-binding at the active site and thus activation of the enzyme. ATP can activate the heterotetramer and the heterodimer composed of IDH3A and IDH3G subunits at low concentrations but inhibits their activities at high concentrations, whereas ATP exhibits only inhibitory effect on the heterodimer composed of IDH3A and IDH3B subunits. In terms of biological role, catalytic subunit of the enzyme which catalyzes the decarboxylation of isocitrate (ICT) into alpha-ketoglutarate. The heterodimer composed of the alpha (IDH3A) and beta (IDH3B) subunits and the heterodimer composed of the alpha (IDH3A) and gamma (IDH3G) subunits, have considerable basal activity but the full activity of the heterotetramer (containing two subunits of IDH3A, one of IDH3B and one of IDH3G) requires the assembly and cooperative function of both heterodimers. This chain is Isocitrate dehydrogenase [NAD] subunit alpha, mitochondrial, found in Homo sapiens (Human).